Consider the following 255-residue polypeptide: 4-diphosphocytidyl-2-C-methyl-D-erythritol kinase (255 aa).

Lys-6 is an active-site residue. An ATP-binding site is contributed by 95-105 (PVCAGLGGGSS). Residue Asp-137 is part of the active site.

It belongs to the GHMP kinase family. IspE subfamily.

It catalyses the reaction 4-CDP-2-C-methyl-D-erythritol + ATP = 4-CDP-2-C-methyl-D-erythritol 2-phosphate + ADP + H(+). It functions in the pathway isoprenoid biosynthesis; isopentenyl diphosphate biosynthesis via DXP pathway; isopentenyl diphosphate from 1-deoxy-D-xylulose 5-phosphate: step 3/6. Functionally, catalyzes the phosphorylation of the position 2 hydroxy group of 4-diphosphocytidyl-2C-methyl-D-erythritol. The chain is 4-diphosphocytidyl-2-C-methyl-D-erythritol kinase from Campylobacter jejuni subsp. jejuni serotype O:23/36 (strain 81-176).